A 56-amino-acid chain; its full sequence is FAAVSVDCSEYPKPACMSEYRPLCGSDNKTYVNKCNFCNAVVESNGTLTLSHFGKC.

Residues 6–56 (VDCSEYPKPACMSEYRPLCGSDNKTYVNKCNFCNAVVESNGTLTLSHFGKC) form the Kazal-like domain. 3 disulfide bridges follow: Cys-8-Cys-38, Cys-16-Cys-35, and Cys-24-Cys-56. Asn-45 is a glycosylation site (N-linked (GlcNAc...) asparagine).

It is found in the secreted. The chain is Ovomucoid from Colinus virginianus (Northern bobwhite).